The following is a 370-amino-acid chain: Chloromuconate cycloisomerase (370 aa).

Lys-165 acts as the Proton acceptor in catalysis. Residues Asp-194, Glu-220, and Asp-245 each coordinate Mn(2+). Residue Glu-323 is the Proton donor of the active site.

Belongs to the mandelate racemase/muconate lactonizing enzyme family. The cofactor is Mn(2+).

The catalysed reaction is 2-[(2R)-2-chloro-2,5-dihydro-5-oxofuryl]acetate = 3-chloro-cis,cis-muconate + H(+). It functions in the pathway aromatic compound metabolism; 3-chlorocatechol degradation. This chain is Chloromuconate cycloisomerase (tfdDI), found in Cupriavidus pinatubonensis (strain JMP 134 / LMG 1197) (Cupriavidus necator (strain JMP 134)).